The following is a 548-amino-acid chain: Elongator complex protein 3 (548 aa).

In terms of domain architecture, Radical SAM core spans 83–373 (RTASGIAVVA…YRVQRDIPMP (291 aa)). Positions 100, 110, and 113 each coordinate [4Fe-4S] cluster. Acetyl-CoA contacts are provided by residues lysine 165, 475-478 (ELHV), 498-500 (FGM), and tyrosine 531. Residues 397 to 548 (TECRDVRTRE…EGPYMVKNLY (152 aa)) enclose the N-acetyltransferase domain.

Belongs to the ELP3 family. As to quaternary structure, component of the elongator complex. Requires [4Fe-4S] cluster as cofactor.

It localises to the cytoplasm. It is found in the nucleus. The catalysed reaction is uridine(34) in tRNA + acetyl-CoA + S-adenosyl-L-methionine + H2O = 5-(carboxymethyl)uridine(34) in tRNA + 5'-deoxyadenosine + L-methionine + CoA + 2 H(+). Its pathway is tRNA modification; 5-methoxycarbonylmethyl-2-thiouridine-tRNA biosynthesis. Its function is as follows. Catalytic tRNA acetyltransferase subunit of the elongator complex which is required for multiple tRNA modifications, including mcm5U (5-methoxycarbonylmethyl uridine), mcm5s2U (5-methoxycarbonylmethyl-2-thiouridine), and ncm5U (5-carbamoylmethyl uridine). In the elongator complex, acts as a tRNA uridine(34) acetyltransferase by mediating formation of carboxymethyluridine in the wobble base at position 34 in tRNAs. Involved in neurogenesis. Involved in somite development. In Danio rerio (Zebrafish), this protein is Elongator complex protein 3.